Here is a 237-residue protein sequence, read N- to C-terminus: Sugar fermentation stimulation protein homolog (237 aa).

Belongs to the SfsA family.

The polypeptide is Sugar fermentation stimulation protein homolog (Pseudomonas putida (strain ATCC 47054 / DSM 6125 / CFBP 8728 / NCIMB 11950 / KT2440)).